Consider the following 470-residue polypeptide: Chromosomal replication initiator protein DnaA (470 aa).

Positions M1–I89 are domain I, interacts with DnaA modulators. Residues I89–P130 are domain II. The tract at residues H131–S348 is domain III, AAA+ region. Positions 176, 178, 179, and 180 each coordinate ATP. A domain IV, binds dsDNA region spans residues T349–A470.

The protein belongs to the DnaA family. Oligomerizes as a right-handed, spiral filament on DNA at oriC.

It localises to the cytoplasm. Plays an essential role in the initiation and regulation of chromosomal replication. ATP-DnaA binds to the origin of replication (oriC) to initiate formation of the DNA replication initiation complex once per cell cycle. Binds the DnaA box (a 9 base pair repeat at the origin) and separates the double-stranded (ds)DNA. Forms a right-handed helical filament on oriC DNA; dsDNA binds to the exterior of the filament while single-stranded (ss)DNA is stabiized in the filament's interior. The ATP-DnaA-oriC complex binds and stabilizes one strand of the AT-rich DNA unwinding element (DUE), permitting loading of DNA polymerase. After initiation quickly degrades to an ADP-DnaA complex that is not apt for DNA replication. Binds acidic phospholipids. The chain is Chromosomal replication initiator protein DnaA from Bacteroides thetaiotaomicron (strain ATCC 29148 / DSM 2079 / JCM 5827 / CCUG 10774 / NCTC 10582 / VPI-5482 / E50).